The chain runs to 266 residues: UPF0354 protein Lm4b_01619 (266 aa).

The protein belongs to the UPF0354 family.

The polypeptide is UPF0354 protein Lm4b_01619 (Listeria monocytogenes serotype 4b (strain CLIP80459)).